The sequence spans 278 residues: Ferredoxin--NADP reductase A (278 aa).

In terms of domain architecture, FAD-binding FR-type spans proline 3 to glycine 103. FAD-binding positions include arginine 52 to serine 55 and threonine 118.

Belongs to the ferredoxin--NADP reductase type 1 family. FAD is required as a cofactor.

The catalysed reaction is 2 reduced [4Fe-4S]-[ferredoxin] + NADP(+) + H(+) = 2 oxidized [4Fe-4S]-[ferredoxin] + NADPH. Transports electrons between NADPH and ferredoxin. Can transfer electrons to ferredoxins Fdx2 and Fdx8. Prefers NADPH to NADH. The protein is Ferredoxin--NADP reductase A of Sorangium cellulosum (strain So ce56) (Polyangium cellulosum (strain So ce56)).